We begin with the raw amino-acid sequence, 701 residues long: Putative pectinesterase/pectinesterase inhibitor 43 (701 aa).

An N-terminal signal peptide occupies residues 1 to 22 (MNKYVLLGVTALIMAMVICVEA). Residues 42-195 (MITKTTVSII…QHLTSNGLAI (154 aa)) form a pectinesterase inhibitor 43 region. Low complexity-rich tracts occupy residues 221–256 (GILG…VDSS) and 263–275 (SSSE…SSNN). Residues 221–351 (GILGSGSSRD…DPLRKLNPLN (131 aa)) form a disordered region. An N-linked (GlcNAc...) asparagine glycan is attached at asparagine 267. Polar residues-rich tracts occupy residues 276–287 (RPLDSSKNQQME) and 313–338 (QKST…SSEN). Residues 391 to 688 (NVVVAKDGSG…FAPGNFLRGN (298 aa)) are pectinesterase 43. Threonine 467 and glutamine 497 together coordinate substrate. Residue aspartate 520 is the Proton donor; for pectinesterase activity of the active site. Cysteine 534 and cysteine 554 form a disulfide bridge. Residue aspartate 541 is the Nucleophile; for pectinesterase activity of the active site. Substrate-binding residues include arginine 609 and tryptophan 611. Residue asparagine 637 is glycosylated (N-linked (GlcNAc...) asparagine).

In the N-terminal section; belongs to the PMEI family. The protein in the C-terminal section; belongs to the pectinesterase family. As to expression, expressed in flower buds.

The protein resides in the secreted. The protein localises to the cell wall. It carries out the reaction [(1-&gt;4)-alpha-D-galacturonosyl methyl ester](n) + n H2O = [(1-&gt;4)-alpha-D-galacturonosyl](n) + n methanol + n H(+). It functions in the pathway glycan metabolism; pectin degradation; 2-dehydro-3-deoxy-D-gluconate from pectin: step 1/5. In terms of biological role, acts in the modification of cell walls via demethylesterification of cell wall pectin. The sequence is that of Putative pectinesterase/pectinesterase inhibitor 43 (PME43) from Arabidopsis thaliana (Mouse-ear cress).